Consider the following 188-residue polypeptide: PRA1 family protein 3 (188 aa).

Met-1 bears the N-acetylmethionine mark. Residues 1–35 lie on the Cytoplasmic side of the membrane; it reads MEVQVAPLRSWEDFFPGSDRFGRPDFKDISKWNNR. 2 consecutive transmembrane segments (helical) span residues 36 to 56 and 57 to 77; these read VVNN…AVVA and IVGF…ILVF. Topologically, residues 78-93 are cytoplasmic; the sequence is LGFVWVSHNKDILRRM. The next 2 membrane-spanning stretches (helical) occupy residues 94–114 and 115–135; these read KKQY…FLIS and YLGD…LMFI. The Cytoplasmic portion of the chain corresponds to 136–188; that stretch reads HASLRLRNIKNKLENKKEEIGLKKTPMGIILDALEQQEDNINKLASYIPKVKE. The interval 136–188 is targeting to endoplasmic reticulum membrane; that stretch reads HASLRLRNIKNKLENKKEEIGLKKTPMGIILDALEQQEDNINKLASYIPKVKE.

This sequence belongs to the PRA1 family. As to quaternary structure, binds to prenylated RAB and Ras superfamily members.

The protein resides in the endoplasmic reticulum membrane. The protein localises to the cell membrane. It localises to the cytoplasm. Its subcellular location is the cytoskeleton. Its function is as follows. Regulates intracellular concentrations of taurine and glutamate. Negatively modulates SLC1A1/EAAC1 glutamate transport activity by decreasing its affinity for glutamate in a PKC activity-dependent manner. May be involved in membrane traffic. The chain is PRA1 family protein 3 (ARL6IP5) from Gallus gallus (Chicken).